We begin with the raw amino-acid sequence, 154 residues long: Small ribosomal subunit protein bS6 (154 aa).

Residues 107-154 are disordered; it reads KSDDRERGFRGPKPPGRFESGRKRGYDDREEFRARAGGDDDDRGLDQE. A compositionally biased stretch (basic and acidic residues) spans 125–154; it reads ESGRKRGYDDREEFRARAGGDDDDRGLDQE.

It belongs to the bacterial ribosomal protein bS6 family.

In terms of biological role, binds together with bS18 to 16S ribosomal RNA. This is Small ribosomal subunit protein bS6 from Granulibacter bethesdensis (strain ATCC BAA-1260 / CGDNIH1).